Reading from the N-terminus, the 211-residue chain is MEKKVYSVDGKELRTINLDDKVFGLPVNDDVIYYAINNELANKRVGTACTKGRAEVHGSNSKPYSQKGTGRARRGDKKSPLLVGGGTIFGPKPRDFSYSMPKKAKRLAMKSILSLKAQNDRLVVVEDFTVESGKTRDLVKILDNFAKGERAVIILKDDDSLVKRAGRNIPHLSFLAYNRLRAHDLFYGRKVIMLESAAKNLSEFYGCKEAE.

A disordered region spans residues 52 to 79 (GRAEVHGSNSKPYSQKGTGRARRGDKKS). Polar residues predominate over residues 58–68 (GSNSKPYSQKG).

It belongs to the universal ribosomal protein uL4 family. In terms of assembly, part of the 50S ribosomal subunit.

In terms of biological role, one of the primary rRNA binding proteins, this protein initially binds near the 5'-end of the 23S rRNA. It is important during the early stages of 50S assembly. It makes multiple contacts with different domains of the 23S rRNA in the assembled 50S subunit and ribosome. Forms part of the polypeptide exit tunnel. The sequence is that of Large ribosomal subunit protein uL4 from Treponema denticola (strain ATCC 35405 / DSM 14222 / CIP 103919 / JCM 8153 / KCTC 15104).